An 89-amino-acid polypeptide reads, in one-letter code: UPF0367 protein CYB_2632 (89 aa).

A disordered region spans residues 69-89 (SKSGSASPMGTRPGFLAQLQS).

The protein belongs to the UPF0367 family.

The chain is UPF0367 protein CYB_2632 from Synechococcus sp. (strain JA-2-3B'a(2-13)) (Cyanobacteria bacterium Yellowstone B-Prime).